Consider the following 599-residue polypeptide: Protein linkin (599 aa).

A signal peptide spans 1 to 19 (MKKILPIIWLINLVSGSLS). The Extracellular portion of the chain corresponds to 20–553 (LEKKAPDLLG…SRLYVTPSAL (534 aa)). N-linked (GlcNAc...) asparagine glycans are attached at residues Asn50, Asn117, Asn163, Asn361, and Asn378. The helical transmembrane segment at 554–574 (IVQSLAVIALVCCMLLMVVVF) threads the bilayer. The Cytoplasmic segment spans residues 575-599 (LHYREKKEDRYERQQQSHRFHFDAM).

The protein belongs to the TIP family. Expressed in all somatic gonadal cells including distal tip cells, anchor cell, uterine precursor cells and spermatheca precursor cells of the hermaphrodite. Also expressed in the pharynx, pharyngeal-intestinal valve, intestine, excretory cell and canal, seam cells, a subset of hypodermal cells, vulval precursor cells of the hermaphrodite and hook precursor cells in the male.

It is found in the apical cell membrane. The protein resides in the lateral cell membrane. Probable cell adhesion protein involved in gonadal cell migration. In Caenorhabditis elegans, this protein is Protein linkin.